Consider the following 1940-residue polypeptide: Myosin-2 (1940 aa).

The Myosin N-terminal SH3-like domain occupies 33 to 82 (DAKTSVFVAEPKESFVKGTVQSREGGKVTVKTEAGATLTVKEDQVFPMNP). T64 and T69 each carry phosphothreonine. Residues 86 to 783 (DKIEDMAMMT…LLGLLEEMRD (698 aa)) enclose the Myosin motor domain. K130 bears the N6,N6,N6-trimethyllysine mark. 179–186 (GESGAGKT) contributes to the ATP binding site. At Y389 the chain carries Phosphotyrosine. S392 carries the post-translational modification Phosphoserine. A Phosphothreonine modification is found at T419. The residue at position 625 (S625) is a Phosphoserine. The segment at 660 to 682 (LNKLMTNLRSTHPHFVRCIIPNE) is actin-binding. H758 carries the post-translational modification Pros-methylhistidine. The actin-binding stretch occupies residues 762 to 776 (KFGHTKVFFKAGLLG). The 30-residue stretch at 786–815 (LAQLITRTQARCRGFLARVEYQKMVERRES) folds into the IQ domain. A coiled-coil region spans residues 844–1940 (LLKSAETEKE…EVHTKVISEE (1097 aa)). Phosphoserine occurs at positions 1093, 1097, 1163, and 1238. Residues 1154–1173 (RLEEAGGATSAQIEMNKKRE) are disordered. T1242 carries the phosphothreonine modification. A Phosphoserine modification is found at S1244. Phosphothreonine is present on T1256. The residue at position 1262 (S1262) is a Phosphoserine. T1287 is subject to Phosphothreonine. Residues S1289, S1293, S1304, and S1307 each carry the phosphoserine modification. Y1465 carries the post-translational modification Phosphotyrosine. The residue at position 1468 (T1468) is a Phosphothreonine. Position 1475 is a phosphoserine (S1475). Y1493 bears the Phosphotyrosine mark. Residue S1496 is modified to Phosphoserine. T1502 is subject to Phosphothreonine. S1515 bears the Phosphoserine mark. T1518 is subject to Phosphothreonine. 6 positions are modified to phosphoserine: S1543, S1555, S1575, S1601, S1715, and S1727. T1731 and T1737 each carry phosphothreonine. A Phosphoserine modification is found at S1740. Residues 1884-1920 (KRQAEEAEEQSNTNLSKFRKLQHELEEAEERADIAES) are disordered.

The protein belongs to the TRAFAC class myosin-kinesin ATPase superfamily. Myosin family. Muscle myosin is a hexameric protein that consists of 2 heavy chain subunits (MHC), 2 alkali light chain subunits (MLC) and 2 regulatory light chain subunits (MLC-2). Interacts with GCSAM.

The protein resides in the cytoplasm. Its subcellular location is the myofibril. Myosins are actin-based motor molecules with ATPase activity essential for muscle contraction. The protein is Myosin-2 (MYH2) of Canis lupus familiaris (Dog).